We begin with the raw amino-acid sequence, 171 residues long: Calcium channel flower homolog (171 aa).

Residues 1-31 are Cytoplasmic-facing; sequence MSGSVAAGAAAGPVPPAQEEGMTWWYRWLCR. The helical transmembrane segment at 32 to 52 threads the bilayer; that stretch reads LAGVLGAVSCAISGLFNCVTI. Residues 53–56 lie on the Extracellular side of the membrane; that stretch reads HPLN. The chain crosses the membrane as a helical span at residues 57 to 77; the sequence is IAAGVWMIMNAFILLLCEAPF. Residues 78–101 lie on the Cytoplasmic side of the membrane; that stretch reads CCQFVEFANTVAEKVDRLRSWQKA. The chain crosses the membrane as a helical span at residues 102–122; sequence VFYCGMAIVPIVMSLTLTTLL. At 123–124 the chain is on the extracellular side; sequence GN. A helical transmembrane segment spans residues 125-141; the sequence is AIAFATGVLYGLSALGK. The Cytoplasmic segment spans residues 142–171; it reads KGDAISYARIQQQRQQADEEKLAETFEGEL.

This sequence belongs to the calcium channel flower family. Interacts with adaptor protein complex 2 (AP-2). As to expression, expressed in calyces in the brain (at protein level). Detected in cultured hippocampal neurons (at protein level).

The protein localises to the cell membrane. The protein resides in the cytoplasmic vesicle. It is found in the secretory vesicle. Its subcellular location is the synaptic vesicle. It localises to the golgi apparatus. The protein localises to the vesicle. In terms of biological role, transmembrane protein which mediates synaptic endocytosis and fitness-based cell culling. In response to different stimulus strengths, controls two major modes of synaptic vesicle (SV) retrieval in hippocampal neurons; Clathrin-mediated endocytosis (CME) in response to mild stimulation and activity-dependent bulk endocytosis (ADBE) in response to strong stimulation. In cytotoxic T-lymphoocytes (CTLs) facilitates calcium-dependent endocytosis of cytotoxic granules (CGs) at the immuno synapse. Different isoforms work as fitness fingerprints in 'loser' and 'winner' cells and thereby mediate win/lose decisions as part of the cell competition process. The polypeptide is Calcium channel flower homolog (Cacfd1) (Rattus norvegicus (Rat)).